Consider the following 2555-residue polypeptide: Neurogenic locus notch homolog protein 1 (2555 aa).

The N-terminal stretch at 1-18 is a signal peptide; the sequence is MPPLLAPLLCLALLPALA. At 19 to 1735 the chain is on the extracellular side; it reads ARGPRCSQPG…VEPPPPAQLH (1717 aa). EGF-like domains are found at residues 20–58, 59–99, 102–139, and 140–176; these read RGPR…PRCQ, DPNP…PLCL, LDNA…KSCQ, and QADP…PTCR. Intrachain disulfides connect Cys-24/Cys-37, Cys-31/Cys-46, Cys-48/Cys-57, Cys-63/Cys-74, Cys-68/Cys-87, Cys-89/Cys-98, Cys-106/Cys-117, Cys-111/Cys-127, Cys-129/Cys-138, Cys-144/Cys-155, Cys-149/Cys-164, Cys-166/Cys-175, Cys-182/Cys-195, Cys-189/Cys-204, Cys-206/Cys-215, Cys-222/Cys-233, Cys-227/Cys-243, Cys-245/Cys-254, Cys-261/Cys-272, Cys-266/Cys-281, Cys-283/Cys-292, Cys-299/Cys-312, Cys-306/Cys-321, Cys-323/Cys-332, Cys-339/Cys-350, Cys-344/Cys-359, Cys-361/Cys-370, Cys-376/Cys-387, Cys-381/Cys-398, Cys-400/Cys-409, Cys-416/Cys-429, Cys-423/Cys-438, and Cys-440/Cys-449. Asn-41 is a glycosylation site (N-linked (GlcNAc...) asparagine). Ser-65 carries an O-linked (Glc...) serine glycan. O-linked (Fuc...) threonine glycosylation is present at Thr-73. A glycan (O-linked (Fuc...) threonine) is linked at Thr-116. Ser-146 carries an O-linked (Glc...) serine glycan. One can recognise an EGF-like 5; calcium-binding domain in the interval 178 to 216; sequence DVNECGQKPGLCRHGGTCHNEVGSYRCVCRATHTGPNCE. An O-linked (Fuc...) threonine glycan is attached at Thr-194. Residues 218 to 255 enclose the EGF-like 6 domain; sequence PYVPCSPSPCQNGGTCRPTGDVTHECACLPGFTGQNCE. An O-linked (Fuc...) threonine; alternate glycan is attached at Thr-232. Thr-232 carries O-linked (GalNAc...) threonine; alternate glycosylation. In terms of domain architecture, EGF-like 7; calcium-binding spans 257–293; that stretch reads NIDDCPGNNCKNGGACVDGVNTYNCRCPPEWTGQYCT. Residues 295-333 form the EGF-like 8; calcium-binding domain; sequence DVDECQLMPNACQNGGTCHNTHGGYNCVCVNGWTGEDCS. Thr-311 carries an O-linked (Fuc...) threonine glycan. Residues 335 to 371 enclose the EGF-like 9; calcium-binding domain; the sequence is NIDDCASAACFHGATCHDRVASFYCECPHGRTGLLCH. A glycan (O-linked (Glc...) serine) is linked at Ser-341. O-linked (Fuc...) threonine glycosylation occurs at Thr-349. Residues 372-410 enclose the EGF-like 10 domain; sequence LNDACISNPCNEGSNCDTNPVNGKAICTCPSGYTGPACS. O-linked (Glc...) serine glycosylation is present at Ser-378. The EGF-like 11; calcium-binding domain occupies 412–450; it reads DVDECSLGANPCEHAGKCINTLGSFECQCLQGYTGPRCE. Residues 420–421 are interaction with DLL4; that stretch reads AN. Ca(2+) is bound by residues Thr-432 and Ser-435. A glycan (O-linked (Glc...) serine) is linked at Ser-435. The interaction with DLL4 stretch occupies residues 448-452; it reads RCEID. Positions 452, 453, and 455 each coordinate Ca(2+). The region spanning 452-488 is the EGF-like 12; calcium-binding domain; it reads DVNECVSNPCQNDATCLDQIGEFQCICMPGYEGVHCE. 3 disulfide bridges follow: Cys-456–Cys-467, Cys-461–Cys-476, and Cys-478–Cys-487. Ser-458 carries an O-linked (Glc...) serine glycan. Residue Thr-466 is glycosylated (O-linked (Fuc...) threonine). Positions 469 and 470 each coordinate Ca(2+). Residues Asn-490, Thr-491, and Glu-493 each coordinate Ca(2+). The EGF-like 13; calcium-binding domain occupies 490–526; sequence NTDECASSPCLHNGRCLDKINEFQCECPTGFTGHLCQ. 74 cysteine pairs are disulfide-bonded: Cys-494-Cys-505, Cys-499-Cys-514, Cys-516-Cys-525, Cys-532-Cys-543, Cys-537-Cys-552, Cys-554-Cys-563, Cys-570-Cys-580, Cys-575-Cys-589, Cys-591-Cys-600, Cys-607-Cys-618, Cys-612-Cys-627, Cys-629-Cys-638, Cys-645-Cys-655, Cys-650-Cys-664, Cys-666-Cys-675, Cys-682-Cys-693, Cys-687-Cys-702, Cys-704-Cys-713, Cys-720-Cys-730, Cys-725-Cys-739, Cys-741-Cys-750, Cys-757-Cys-768, Cys-762-Cys-777, Cys-779-Cys-788, Cys-795-Cys-806, Cys-800-Cys-815, Cys-817-Cys-826, Cys-833-Cys-844, Cys-838-Cys-855, Cys-857-Cys-866, Cys-873-Cys-884, Cys-878-Cys-893, Cys-895-Cys-904, Cys-911-Cys-922, Cys-916-Cys-931, Cys-933-Cys-942, Cys-949-Cys-960, Cys-954-Cys-969, Cys-971-Cys-980, Cys-987-Cys-998, Cys-992-Cys-1007, Cys-1009-Cys-1018, Cys-1025-Cys-1036, Cys-1030-Cys-1045, Cys-1047-Cys-1056, Cys-1063-Cys-1074, Cys-1068-Cys-1083, Cys-1085-Cys-1094, Cys-1101-Cys-1122, Cys-1116-Cys-1131, Cys-1133-Cys-1142, Cys-1149-Cys-1160, Cys-1154-Cys-1169, Cys-1171-Cys-1180, Cys-1187-Cys-1198, Cys-1192-Cys-1207, Cys-1209-Cys-1218, Cys-1238-Cys-1253, Cys-1255-Cys-1264, Cys-1271-Cys-1284, Cys-1276-Cys-1293, Cys-1295-Cys-1304, Cys-1311-Cys-1322, Cys-1316-Cys-1334, Cys-1336-Cys-1345, Cys-1352-Cys-1363, Cys-1357-Cys-1372, Cys-1374-Cys-1383, Cys-1391-Cys-1403, Cys-1397-Cys-1414, Cys-1416-Cys-1425, Cys-1449-Cys-1472, Cys-1454-Cys-1467, and Cys-1463-Cys-1479. O-linked (Glc...) serine glycosylation is present at Ser-496. Asp-507 and Lys-508 together coordinate Ca(2+). An EGF-like 14; calcium-binding domain is found at 528–564; it reads DVDECASTPCKNGAKCLDGPNTYTCVCTEGYTGTHCE. A glycan (O-linked (Glc...) serine) is linked at Ser-534. An EGF-like 15; calcium-binding domain is found at 566 to 601; the sequence is DIDECDPDPCHYGSCKDGVATFTCLCRPGYTGHHCE. Residues 603–639 enclose the EGF-like 16; calcium-binding domain; that stretch reads NINECSSQPCRHGGTCQDRDNAYLCFCLKGTTGPNCE. O-linked (Glc...) serine glycosylation is present at Ser-609. An O-linked (Fuc...) threonine glycan is attached at Thr-617. The EGF-like 17; calcium-binding domain occupies 641–676; that stretch reads NLDDCASSPCDSGTCLDKIDGYECACEPGYTGSMCN. Ser-647 is a glycosylation site (O-linked (Glc...) serine). Positions 678–714 constitute an EGF-like 18; calcium-binding domain; it reads NIDECAGNPCHNGGTCEDGINGFTCRCPEGYHDPTCL. O-linked (Fuc...) threonine glycosylation is present at Thr-692. Residues 716–751 enclose the EGF-like 19; calcium-binding domain; it reads EVNECNSNPCVHGACRDSLNGYKCDCDPGWSGTNCD. O-linked (Glc...) serine glycosylation occurs at Ser-722. Residues 753–789 enclose the EGF-like 20 domain; sequence NNNECESNPCVNGGTCKDMTSGYVCTCREGFSGPNCQ. A glycan (O-linked (Glc...) serine) is linked at Ser-759. The O-linked (Fuc...) threonine glycan is linked to Thr-767. O-linked (GlcNAc) serine glycosylation occurs at Ser-784. Residues 791 to 827 enclose the EGF-like 21; calcium-binding domain; that stretch reads NINECASNPCLNQGTCIDDVAGYKCNCLLPYTGATCE. Ser-797 carries O-linked (Glc...) serine glycosylation. O-linked (Fuc...) threonine glycosylation occurs at Thr-805. An EGF-like 22 domain is found at 829–867; that stretch reads VLAPCAPSPCRNGGECRQSEDYESFSCVCPTGWQGQTCE. Positions 869 to 905 constitute an EGF-like 23; calcium-binding domain; the sequence is DINECVLSPCRHGASCQNTHGGYRCHCQAGYSGRNCE. Residues 907 to 943 form the EGF-like 24 domain; the sequence is DIDDCRPNPCHNGGSCTDGINTAFCDCLPGFRGTFCE. The O-linked (Fuc) serine glycan is linked to Ser-921. In terms of domain architecture, EGF-like 25; calcium-binding spans 945-981; that stretch reads DINECASDPCRNGANCTDCVDSYTCTCPAGFSGIHCE. Ser-951 carries O-linked (Glc...) serine glycosylation. N-linked (GlcNAc...) asparagine glycosylation is present at Asn-959. EGF-like domains are found at residues 983 to 1019, 1021 to 1057, 1059 to 1095, 1097 to 1143, and 1145 to 1181; these read NTPD…SYCQ, DVNE…PNCQ, LVHW…LYCD, PSVS…SYCE, and LVDE…VNCS. The O-linked (Fuc...) threonine glycan is linked to Thr-997. Ser-1027 is a glycosylation site (O-linked (Glc...) serine). O-linked (Fuc...) threonine glycosylation is present at Thr-1035. A glycan (O-linked (Glc...) serine) is linked at Ser-1065. Thr-1159 carries an O-linked (Fuc...) threonine glycan. Asn-1179 carries an N-linked (GlcNAc...) asparagine glycan. Residues 1183 to 1219 form the EGF-like 31; calcium-binding domain; the sequence is EIDECLSHPCQNGGTCLDLPNTYKCSCPRGTQGVHCE. An O-linked (Glc...) serine glycan is attached at Ser-1189. O-linked (Fuc...) threonine glycosylation occurs at Thr-1197. The EGF-like 32; calcium-binding domain occupies 1221-1265; the sequence is NVDDCNPPVDPVSRSPKCFNNGTCVDQVGGYSCTCPPGFVGERCE. N-linked (GlcNAc...) asparagine glycosylation occurs at Asn-1241. EGF-like domains are found at residues 1267–1305, 1307–1346, 1348–1384, and 1387–1426; these read DVNE…RRCE, VING…ATCE, DART…PECQ, and ASSP…LLCH. Ser-1273 carries an O-linked (Glc...) serine glycan. O-linked (Fuc...) threonine glycosylation is present at Thr-1362. The O-linked (GlcNAc...) threonine glycan is linked to Thr-1379. O-linked (Fuc...) threonine; alternate glycosylation occurs at Thr-1402. A glycan (O-linked (GalNAc...) threonine; alternate) is linked at Thr-1402. 3 LNR repeats span residues 1449–1489, 1490–1531, and 1532–1571; these read CELP…PWKN, CTQS…CNPL, and YDQY…RLAA. Ca(2+)-binding residues include Asp-1457, Asn-1460, Asp-1475, and Asp-1478. Asn-1489 is a glycosylation site (N-linked (GlcNAc...) asparagine). Disulfide bonds link Cys-1490-Cys-1514, Cys-1496-Cys-1509, Cys-1505-Cys-1521, Cys-1536-Cys-1549, and Cys-1545-Cys-1561. An N-linked (GlcNAc...) asparagine glycan is attached at Asn-1587. Thr-1725 carries an O-linked (GalNAc...) threonine glycan. The interval 1728–1760 is interaction with PSEN1; the sequence is PPPPAQLHFMYVAAAAFVLLFFVGCGVLLSRKR. Residues 1736 to 1756 form a helical membrane-spanning segment; it reads FMYVAAAAFVLLFFVGCGVLL. Over 1757–2555 the chain is Cytoplasmic; that stretch reads SRKRRRQHGQ…QIARIPEAFK (799 aa). A Glycyl lysine isopeptide (Lys-Gly) (interchain with G-Cter in ubiquitin) cross-link involves residue Lys-1759. The disordered stretch occupies residues 1780–1808; sequence KKKRREPLGEDSVGLKPLKNASDGALMDD. A Phosphothreonine modification is found at Thr-1861. ANK repeat units follow at residues 1927 to 1956, 1960 to 1990, 1994 to 2023, 2027 to 2056, 2060 to 2089, and 2095 to 2122; these read TGET…DANI, MGRT…DLDA, DGTT…DVNA, LGKS…NKDM, REET…NRDI, and RLPR…VRSP. The tract at residues 1947–1955 is HIF1AN-binding; it reads LLEASADAN. Asn-1955 is modified ((3S)-3-hydroxyasparagine; by HIF1AN; partial). The segment at 2014 to 2022 is HIF1AN-binding; sequence LINSHADVN. Residue Asn-2022 is modified to (3S)-3-hydroxyasparagine; by HIF1AN. 3 disordered regions span residues 2151–2194, 2379–2447, and 2483–2555; these read PGVQ…LDSS, LVQT…QPLG, and TPPS…EAFK. Residues 2379–2408 show a composition bias toward low complexity; that stretch reads LVQTQQVQPQNLQMQQQNLQPANIQQQQSL. Residues 2483–2502 are compositionally biased toward polar residues; the sequence is TPPSQHSYSSPVDNTPSHQL. Positions 2512-2527 are enriched in low complexity; the sequence is PSPESPDQWSSSSPHS. Over residues 2528-2547 the composition is skewed to polar residues; that stretch reads NVSDWSEGVSSPPTSMQSQI.

It belongs to the NOTCH family. Heterodimer of a C-terminal fragment N(TM) and an N-terminal fragment N(EC) which are probably linked by disulfide bonds. Interacts with DNER, DTX1, DTX2 and RBPJ/RBPSUH. Also interacts with MAML1, MAML2 and MAML3 which act as transcriptional coactivators for NOTCH1. The NOTCH1 intracellular domain interacts with SNW1; the interaction involves multimerized NOTCH1 NICD and is implicated in a formation of an intermediate preactivation complex which associates with DNA-bound CBF-1/RBPJ. The activated membrane-bound form interacts with AAK1 which promotes NOTCH1 stabilization. Forms a trimeric complex with FBXW7 and SGK1. Interacts with HIF1AN. HIF1AN negatively regulates the function of notch intracellular domain (NICD), accelerating myogenic differentiation. Interacts (via NICD) with SNAI1 (via zinc fingers); the interaction induces SNAI1 degradation via MDM2-mediated ubiquitination and inhibits SNAI1-induced cell invasion. Interacts (via NICD) with MDM2A. Interacts (via NICD) with BCL6; the interaction decreases MAML1 recruitment by NOTCH1 NICD on target genes DNA and inhibits NOTCH1 transactivation activity. Interacts with THBS4. Interacts (via the EGF-like repeat region) with CCN3 (via CTCK domain). Interacts (via EGF-like domains) with DLL4 (via N-terminal DSL and MNNL domains). Interacts with ZMIZ1. Interacts (via NICD domain) with MEGF10 (via the cytoplasmic domain). Interacts with DLL1 and JAG1. Interacts (via NICD domain) with PRAG1. Forms a complex with PRAG1, N1ICD and MAML1, in a MAML1-dependent manner. Interacts (via transmembrane region) with PSEN1; the interaction is direct. Interacts with ZFP64. Post-translationally, synthesized in the endoplasmic reticulum as an inactive form which is proteolytically cleaved by a furin-like convertase in the trans-Golgi network before it reaches the plasma membrane to yield an active, ligand-accessible form. Cleavage results in a C-terminal fragment N(TM) and a N-terminal fragment N(EC). Following ligand binding, it is cleaved by ADAM17 to yield a membrane-associated intermediate fragment called notch extracellular truncation (NEXT). Following endocytosis, this fragment is then cleaved by one of the catalytic subunits of gamma-secretase (PSEN1 or PSEN2), to release a Notch-derived peptide containing the intracellular domain (NICD) from the membrane. In terms of processing, phosphorylated. O-glycosylated on the EGF-like domains. O-glucosylated at Ser-435 by KDELC1 and KDELC2. Contains both O-linked fucose and O-linked glucose in the EGF-like domains 11, 12 and 13, which are interacting with the residues on DLL4. O-linked glycosylation by GALNT11 is involved in determination of left/right symmetry: glycosylation promotes activation of NOTCH1, possibly by promoting cleavage by ADAM17, modulating the balance between motile and immotile (sensory) cilia at the left-right organiser (LRO). MFNG-, RFNG- and LFNG-mediated modification of O-fucose residues at specific EGF-like domains results in inhibition of its activation by JAG1 and enhancement of its activation by DLL1 via an increased binding to DLL1. Post-translationally, ubiquitinated. Undergoes 'Lys-29'-linked polyubiquitination by ITCH; promotes the lysosomal degradation of non-activated internalized NOTCH1. Deubiquitination by USP12 is required for transport of internalized non-activated receptor from late endosomes to lysosomes for degradation. Monoubiquitination at Lys-1759 is required for activation by gamma-secretase cleavage, it promotes interaction with AAK1, which stabilizes it. Deubiquitination by EIF3F is necessary for nuclear import of activated Notch. In terms of processing, hydroxylated at Asn-1955 by HIF1AN. Hydroxylated at Asn-2022 by HIF1AN. Hydroxylation reduces affinity for HI1AN and may thus indirectly modulate negative regulation of NICD. In terms of tissue distribution, in fetal tissues most abundant in spleen, brain stem and lung. Also present in most adult tissues where it is found mainly in lymphoid tissues.

It localises to the cell membrane. The protein resides in the late endosome membrane. It is found in the nucleus. Functions as a receptor for membrane-bound ligands Jagged-1 (JAG1), Jagged-2 (JAG2) and Delta-1 (DLL1) to regulate cell-fate determination. Upon ligand activation through the released notch intracellular domain (NICD) it forms a transcriptional activator complex with RBPJ/RBPSUH and activates genes of the enhancer of split locus. Affects the implementation of differentiation, proliferation and apoptotic programs. Involved in angiogenesis; negatively regulates endothelial cell proliferation and migration and angiogenic sprouting. Involved in the maturation of both CD4(+) and CD8(+) cells in the thymus. Important for follicular differentiation and possibly cell fate selection within the follicle. During cerebellar development, functions as a receptor for neuronal DNER and is involved in the differentiation of Bergmann glia. Represses neuronal and myogenic differentiation. May play an essential role in postimplantation development, probably in some aspect of cell specification and/or differentiation. May be involved in mesoderm development, somite formation and neurogenesis. May enhance HIF1A function by sequestering HIF1AN away from HIF1A. Required for the THBS4 function in regulating protective astrogenesis from the subventricular zone (SVZ) niche after injury. Involved in determination of left/right symmetry by modulating the balance between motile and immotile (sensory) cilia at the left-right organiser (LRO). This chain is Neurogenic locus notch homolog protein 1 (NOTCH1), found in Homo sapiens (Human).